Consider the following 249-residue polypeptide: Probable transcriptional regulatory protein CYA_2259 (249 aa).

The protein belongs to the TACO1 family.

Its subcellular location is the cytoplasm. The sequence is that of Probable transcriptional regulatory protein CYA_2259 from Synechococcus sp. (strain JA-3-3Ab) (Cyanobacteria bacterium Yellowstone A-Prime).